A 370-amino-acid polypeptide reads, in one-letter code: tRNA-specific 2-thiouridylase MnmA (370 aa).

ATP is bound by residues 24–31 (AMSGGVDS) and L50. C118 functions as the Nucleophile in the catalytic mechanism. A disulfide bridge links C118 with C214. Residue G142 coordinates ATP. Residues 164 to 166 (KDQ) are interaction with tRNA. The active-site Cysteine persulfide intermediate is the C214.

It belongs to the MnmA/TRMU family.

Its subcellular location is the cytoplasm. It catalyses the reaction S-sulfanyl-L-cysteinyl-[protein] + uridine(34) in tRNA + AH2 + ATP = 2-thiouridine(34) in tRNA + L-cysteinyl-[protein] + A + AMP + diphosphate + H(+). In terms of biological role, catalyzes the 2-thiolation of uridine at the wobble position (U34) of tRNA, leading to the formation of s(2)U34. This Ehrlichia ruminantium (strain Welgevonden) protein is tRNA-specific 2-thiouridylase MnmA.